The chain runs to 376 residues: Polar flagellin A (376 aa).

Coiled-coil stretches lie at residues 103–128 and 310–338; these read SNSKAERVAIQEEVTALNDELNRIAE and FQNRFNHAISNLDNINENVNASNSRIKDT.

Belongs to the bacterial flagellin family. In terms of assembly, heteromer of multiple flagellin subunits including FlaA, FlaB/D, FlaC, FlaE and FlaF.

The protein resides in the secreted. It localises to the bacterial flagellum. Functionally, flagellin is the subunit protein which polymerizes to form the filaments of bacterial flagella. FlaA is not essential for polar flagellar synthesis and swimming motility. Homomer of FlaA is able to form a functional filament. The protein is Polar flagellin A (flaA) of Vibrio parahaemolyticus serotype O3:K6 (strain RIMD 2210633).